Here is a 437-residue protein sequence, read N- to C-terminus: Transcription factor AP-2-alpha (437 aa).

Lysine 10 is covalently cross-linked (Glycyl lysine isopeptide (Lys-Gly) (interchain with G-Cter in SUMO); alternate). Lysine 10 participates in a covalent cross-link: Glycyl lysine isopeptide (Lys-Gly) (interchain with G-Cter in SUMO2); alternate. A disordered region spans residues 14–107 (CEDRHDGTSN…GQRQSQESGL (94 aa)). Positions 57-62 (YFPPPY) match the PPxY motif motif. 2 stretches are compositionally biased toward low complexity: residues 65–74 (IYPQSQDPYS) and 88–101 (QPQP…GQRQ). Residues lysine 177 and lysine 184 each participate in a glycyl lysine isopeptide (Lys-Gly) (interchain with G-Cter in SUMO2) cross-link. Serine 239 is subject to Phosphoserine; by PKA. The tract at residues 280–410 (RRKAANVTLL…YLTEALKAMD (131 aa)) is H-S-H (helix-span-helix), dimerization. Over residues 414 to 427 (LSNNPNSHTDNNAK) the composition is skewed to polar residues. Residues 414–437 (LSNNPNSHTDNNAKSSDKEEKHRK) form a disordered region. Positions 428 to 437 (SSDKEEKHRK) are enriched in basic and acidic residues.

It belongs to the AP-2 family. In terms of assembly, binds DNA as a dimer. Can form homodimers or heterodimers with other AP-2 family members. Interacts with WWOX. Interacts with CITED4. Interacts with UBE2I. Interacts with RALBP1 in a complex also containing EPN1 and NUMB during interphase and mitosis. Interacts with KCTD1; this interaction represses transcription activation. Interacts (via C-terminus) with CITED2 (via C-terminus); the interaction stimulates TFAP2A-transcriptional activation. Interacts (via N-terminus) with EP300 (via N-terminus); the interaction requires CITED2. Interacts with KCTD15; this interaction inhibits TFAP2A transcriptional activation. Post-translationally, sumoylated on Lys-10; which inhibits transcriptional activity.

Its subcellular location is the nucleus. Its function is as follows. Sequence-specific DNA-binding protein that interacts with inducible viral and cellular enhancer elements to regulate transcription of selected genes. AP-2 factors bind to the consensus sequence 5'-GCCNNNGGC-3' and activate genes involved in a large spectrum of important biological functions including proper eye, face, body wall, limb and neural tube development. They also suppress a number of genes including MCAM/MUC18, C/EBP alpha and MYC. AP-2-alpha is the only AP-2 protein required for early morphogenesis of the lens vesicle. Together with the CITED2 coactivator, stimulates the PITX2 P1 promoter transcription activation. Associates with chromatin to the PITX2 P1 promoter region. The sequence is that of Transcription factor AP-2-alpha (TFAP2A) from Homo sapiens (Human).